The following is a 416-amino-acid chain: Glutamyl-tRNA reductase (416 aa).

Residues Thr49 to Arg52, Ser105, Glu110 to Gln112, and Gln116 contribute to the substrate site. Catalysis depends on Cys50, which acts as the Nucleophile. Gly185–Ile190 serves as a coordination point for NADP(+).

The protein belongs to the glutamyl-tRNA reductase family. Homodimer.

The catalysed reaction is (S)-4-amino-5-oxopentanoate + tRNA(Glu) + NADP(+) = L-glutamyl-tRNA(Glu) + NADPH + H(+). The protein operates within porphyrin-containing compound metabolism; protoporphyrin-IX biosynthesis; 5-aminolevulinate from L-glutamyl-tRNA(Glu): step 1/2. Its function is as follows. Catalyzes the NADPH-dependent reduction of glutamyl-tRNA(Glu) to glutamate 1-semialdehyde (GSA). This Shewanella oneidensis (strain ATCC 700550 / JCM 31522 / CIP 106686 / LMG 19005 / NCIMB 14063 / MR-1) protein is Glutamyl-tRNA reductase.